A 459-amino-acid polypeptide reads, in one-letter code: uncharacterized protein (459 aa).

The B12-binding domain occupies Thr-13–Lys-145. Residues Ala-188–Asp-402 enclose the Radical SAM core domain. [4Fe-4S] cluster contacts are provided by Cys-202, Cys-206, and Cys-209.

The protein belongs to the methyltransferase superfamily. [4Fe-4S] cluster is required as a cofactor.

This is an uncharacterized protein from Pyrococcus horikoshii (strain ATCC 700860 / DSM 12428 / JCM 9974 / NBRC 100139 / OT-3).